Here is a 451-residue protein sequence, read N- to C-terminus: Exodeoxyribonuclease 7 large subunit (451 aa).

This sequence belongs to the XseA family. As to quaternary structure, heterooligomer composed of large and small subunits.

It is found in the cytoplasm. It carries out the reaction Exonucleolytic cleavage in either 5'- to 3'- or 3'- to 5'-direction to yield nucleoside 5'-phosphates.. Bidirectionally degrades single-stranded DNA into large acid-insoluble oligonucleotides, which are then degraded further into small acid-soluble oligonucleotides. The sequence is that of Exodeoxyribonuclease 7 large subunit from Thiobacillus denitrificans (strain ATCC 25259 / T1).